We begin with the raw amino-acid sequence, 156 residues long: Ribosomal RNA large subunit methyltransferase H (156 aa).

Residues Leu-73, Gly-104, and 123–128 (LSAMTL) each bind S-adenosyl-L-methionine.

It belongs to the RNA methyltransferase RlmH family. As to quaternary structure, homodimer.

The protein localises to the cytoplasm. It carries out the reaction pseudouridine(1915) in 23S rRNA + S-adenosyl-L-methionine = N(3)-methylpseudouridine(1915) in 23S rRNA + S-adenosyl-L-homocysteine + H(+). Its function is as follows. Specifically methylates the pseudouridine at position 1915 (m3Psi1915) in 23S rRNA. This Laribacter hongkongensis (strain HLHK9) protein is Ribosomal RNA large subunit methyltransferase H.